Consider the following 101-residue polypeptide: uncharacterized protein (101 aa).

A signal peptide spans 1-17 (MKKAAVLAVVLSLGLAG). The N-palmitoyl cysteine moiety is linked to residue C18. C18 is lipidated: S-diacylglycerol cysteine.

It localises to the cell membrane. This is an uncharacterized protein from Pasteurella multocida (strain Pm70).